The sequence spans 473 residues: Photosystem II CP43 reaction center protein (473 aa).

A propeptide spanning residues 1 to 14 (MKILYSLRRYFHVE) is cleaved from the precursor. N-acetylthreonine is present on Thr-15. At Thr-15 the chain carries Phosphothreonine. The next 5 membrane-spanning stretches (helical) occupy residues 69–93 (LFEV…PHLA), 134–155 (LIGP…KDKN), 178–200 (KAIW…RKIT), 255–275 (KPFA…LSYS), and 291–312 (WFNN…ASQA). Position 367 (Glu-367) interacts with [CaMn4O5] cluster. Residues 447 to 471 (RARAAAAGFEKGIDRDSEPVLYMEP) form a helical membrane-spanning segment.

This sequence belongs to the PsbB/PsbC family. PsbC subfamily. In terms of assembly, PSII is composed of 1 copy each of membrane proteins PsbA, PsbB, PsbC, PsbD, PsbE, PsbF, PsbH, PsbI, PsbJ, PsbK, PsbL, PsbM, PsbT, PsbX, PsbY, PsbZ, Psb30/Ycf12, at least 3 peripheral proteins of the oxygen-evolving complex and a large number of cofactors. It forms dimeric complexes. Binds multiple chlorophylls and provides some of the ligands for the Ca-4Mn-5O cluster of the oxygen-evolving complex. It may also provide a ligand for a Cl- that is required for oxygen evolution. PSII binds additional chlorophylls, carotenoids and specific lipids. serves as cofactor.

The protein resides in the plastid. Its subcellular location is the chloroplast thylakoid membrane. Functionally, one of the components of the core complex of photosystem II (PSII). It binds chlorophyll and helps catalyze the primary light-induced photochemical processes of PSII. PSII is a light-driven water:plastoquinone oxidoreductase, using light energy to abstract electrons from H(2)O, generating O(2) and a proton gradient subsequently used for ATP formation. The polypeptide is Photosystem II CP43 reaction center protein (Chara vulgaris (Common stonewort)).